A 484-amino-acid polypeptide reads, in one-letter code: Carbohydrate sulfotransferase 7 (484 aa).

Residues 1–12 (MKGRRRRRREYC) are Cytoplasmic-facing. A helical; Signal-anchor for type II membrane protein transmembrane segment spans residues 13–33 (KFTLLLALYTLLLLLVPSVLD). The Lumenal portion of the chain corresponds to 34–484 (SHSEQDKGRN…PLETKANWAV (451 aa)). A disordered region spans residues 71–90 (RSLAEGNPDRSPGSPGNLSA). Asn-87 is a glycosylation site (N-linked (GlcNAc...) asparagine). 108–114 (WRTGSSF) is a 3'-phosphoadenylyl sulfate binding site. An N-linked (GlcNAc...) asparagine glycan is attached at Asn-184. 276 to 284 (RDPRAVHNS) contacts 3'-phosphoadenylyl sulfate. A glycan (N-linked (GlcNAc...) asparagine) is linked at Asn-405. Ser-460 carries the post-translational modification Phosphoserine. Residues 460-473 (SGDERDRKTVREGE) are compositionally biased toward basic and acidic residues. The interval 460-484 (SGDERDRKTVREGETPLETKANWAV) is disordered.

It belongs to the sulfotransferase 1 family. Gal/GlcNAc/GalNAc subfamily. In terms of tissue distribution, widely expressed. Highly expressed in kidney. Expressed at lower level in heart, lung and liver.

The protein localises to the golgi apparatus membrane. The enzyme catalyses chondroitin beta-D-glucuronate + n 3'-phosphoadenylyl sulfate = chondroitin 6'-sulfate + n adenosine 3',5'-bisphosphate + n H(+). In terms of biological role, sulfotransferase that utilizes 3'-phospho-5'-adenylyl sulfate (PAPS) as sulfonate donor to catalyze the transfer of sulfate to position 6 of non-reducing N-acetylglucosamine (GlcNAc) residues. Preferentially acts on mannose-linked GlcNAc. Also able to catalyze the transfer of sulfate to position 6 of the N-acetylgalactosamine (GalNAc) residue of chondroitin. Also acts on core 2 mucin-type oligosaccharide and N-acetyllactosamine oligomer with a lower efficiency. Has weak or no activity toward keratan sulfate and oligosaccharides containing the Galbeta1-4GlcNAc. Catalyzes 6-O-sulfation of beta-benzyl GlcNAc but not alpha- or beta-benzyl GalNAc. This is Carbohydrate sulfotransferase 7 (Chst7) from Mus musculus (Mouse).